We begin with the raw amino-acid sequence, 260 residues long: Triosephosphate isomerase (260 aa).

Position 11–13 (11–13 (NWK)) interacts with substrate. H103 (electrophile) is an active-site residue. The Proton acceptor role is filled by E175. Substrate is bound by residues G181, S220, and 241–242 (GG).

Belongs to the triosephosphate isomerase family. Homodimer.

Its subcellular location is the cytoplasm. It carries out the reaction D-glyceraldehyde 3-phosphate = dihydroxyacetone phosphate. It functions in the pathway carbohydrate biosynthesis; gluconeogenesis. It participates in carbohydrate degradation; glycolysis; D-glyceraldehyde 3-phosphate from glycerone phosphate: step 1/1. Involved in the gluconeogenesis. Catalyzes stereospecifically the conversion of dihydroxyacetone phosphate (DHAP) to D-glyceraldehyde-3-phosphate (G3P). This Shewanella sediminis (strain HAW-EB3) protein is Triosephosphate isomerase.